The sequence spans 712 residues: WD repeat-containing protein 91 (712 aa).

Positions 148–180 (RRTNQVQEENEVLRQKLFALQAEIHRLKKEEQQ) form a coiled coil. Serine 221 is modified (phosphoserine). Low complexity predominate over residues 230–243 (LLPQSKKSPSRLSP). A disordered region spans residues 230 to 336 (LLPQSKKSPS…EAEPCPELHT (107 aa)). 2 positions are modified to phosphoserine: serine 253 and serine 258. Basic and acidic residues predominate over residues 297 to 308 (RLQDHGKERKEL). WD repeat units follow at residues 371 to 410 (EHHSSIMHCRVDCSGRRVASLDVDGVIKVWSFNPIMQTKA), 413 to 453 (ISKS…NLCE), 480 to 520 (AAPS…QQLQ), 525 to 564 (PEPIAINCTAFNHNGNLLVTGAADGVIRLFDMQQHECAMS), 567 to 606 (AHYGEVYSVEFSYDENTVYSIGEDGKFIQWNIHKSGLKVS), 629 to 667 (VQVPRGRLFAFDSEGNYMLTCSATGGVIYKLGGDEKVLE), and 674 to 712 (GHRAPVVTVDWSTAMDCGTCLTASMDGKIKLTTLLAHKA).

It belongs to the WD repeat WDR91 family. As to quaternary structure, interacts with WDR81; involved in early to late endosome cargo transport. Interacts with BECN1; negatively regulates the PI3 kinase/PI3K activity associated with endosomal membranes.

It localises to the early endosome membrane. It is found in the late endosome membrane. Functionally, functions as a negative regulator of the PI3 kinase/PI3K activity associated with endosomal membranes via BECN1, a core subunit of the PI3K complex. By modifying the phosphatidylinositol 3-phosphate/PtdInsP3 content of endosomal membranes may regulate endosome fusion, recycling, sorting and early to late endosome transport. It is for instance, required for the delivery of cargos like BST2/tetherin from early to late endosome and thereby participates indirectly to their degradation by the lysosome. May play a role in meiosis. The chain is WD repeat-containing protein 91 from Pongo abelii (Sumatran orangutan).